A 193-amino-acid chain; its full sequence is Dual-action ribosomal maturation protein DarP (193 aa).

Residues Met-1–Glu-10 are compositionally biased toward basic and acidic residues. 2 disordered regions span residues Met-1–Arg-20 and Gln-171–Glu-193. Residues Gly-178–Glu-193 show a composition bias toward acidic residues.

Belongs to the DarP family.

The protein resides in the cytoplasm. Functionally, member of a network of 50S ribosomal subunit biogenesis factors which assembles along the 30S-50S interface, preventing incorrect 23S rRNA structures from forming. Promotes peptidyl transferase center (PTC) maturation. This is Dual-action ribosomal maturation protein DarP from Xanthomonas axonopodis pv. citri (strain 306).